The following is a 263-amino-acid chain: 7beta-hydroxysteroid dehydrogenase (263 aa).

NADP(+) contacts are provided by residues 17 to 21, 40 to 41, and 66 to 67; these read TEGVG, RR, and DF. The active-site Proton acceptor is the tyrosine 156. NADP(+) is bound at residue serine 240.

Belongs to the short-chain dehydrogenases/reductases (SDR) family. As to quaternary structure, homodimer.

It catalyses the reaction a 7beta-hydroxysteroid + NADP(+) = a 7-oxosteroid + NADPH + H(+). It carries out the reaction 7-oxolithocholate + NADPH + H(+) = ursodeoxycholate + NADP(+). The enzyme catalyses 7beta-hydroxy-3,12-dioxo-5beta-cholan-24-oate + NADP(+) = dehydrocholate + NADPH + H(+). The catalysed reaction is ursocholate + NADP(+) = 3alpha,12alpha-dihydroxy-7-oxo-5beta-cholanate + NADPH + H(+). In terms of biological role, 7beta-hydroxysteroid dehydrogenase that catalyzes the reduction of the 7-oxo group of 7-oxo-lithocholate (7-oxo-LCA), to yield ursodeoxycholate (UDCA). As C.aerofaciens is an intestinal bacterium, this enzyme probably contributes to the formation of UDCA in the human colon. UDCA is regarded as a chemopreventive beneficial secondary bile acid due to its low hydrophobicity; it protects hepatocytes and bile duct epithelial cells against necrosis and apoptosis induced by more hydrophobic secondary bile acids like deoxycholate (DCA). This enzyme is also able to catalyze the reverse reaction, i.e. the oxidation of the 7beta-hydroxy group of UDCA to 7-oxo-LCA. To a lesser extent, is also active on the taurine- and glycine-conjugates of ursodeoxycholate. It is specific for NADPH/NADP(+) as the electron acceptor/donor since it is not active with NADH/NAD(+). In the presence of NADPH, 7beta-HSDH can also reduce dehydrocholate. And is also able to oxidize ursocholate. This chain is 7beta-hydroxysteroid dehydrogenase, found in Collinsella aerofaciens (strain ATCC 25986 / DSM 3979 / JCM 10188 / KCTC 3647 / NCTC 11838 / VPI 1003).